The chain runs to 289 residues: D-alanine aminotransferase (289 aa).

Tyr-31 is a substrate binding site. Arg-50 lines the pyridoxal 5'-phosphate pocket. Substrate contacts are provided by Arg-99 and His-101. Residue Lys-147 is the Proton acceptor of the active site. The residue at position 147 (Lys-147) is an N6-(pyridoxal phosphate)lysine. Residue Glu-179 participates in pyridoxal 5'-phosphate binding.

It belongs to the class-IV pyridoxal-phosphate-dependent aminotransferase family. Homodimer. Requires pyridoxal 5'-phosphate as cofactor.

The catalysed reaction is D-alanine + 2-oxoglutarate = D-glutamate + pyruvate. Acts on the D-isomers of alanine, leucine, aspartate, glutamate, aminobutyrate, norvaline and asparagine. The enzyme transfers an amino group from a substrate D-amino acid to the pyridoxal phosphate cofactor to form pyridoxamine and an alpha-keto acid in the first half-reaction. The second half-reaction is the reverse of the first, transferring the amino group from the pyridoxamine to a second alpha-keto acid to form the product D-amino acid via a ping-pong mechanism. This is an important process in the formation of D-alanine and D-glutamate, which are essential bacterial cell wall components. This is D-alanine aminotransferase (dat) from Listeria innocua serovar 6a (strain ATCC BAA-680 / CLIP 11262).